Here is a 310-residue protein sequence, read N- to C-terminus: Serine protease 30 (310 aa).

The signal sequence occupies residues 1–21 (MESRARCIFLLLLQILTRARG). A propeptide spans 22-36 (DILPSVCGHSRDAGK) (activation peptide). One can recognise a Peptidase S1 domain in the interval 37 to 277 (IVGGQDALEG…YVDWIQRILA (241 aa)). Cysteine 63 and cysteine 79 are oxidised to a cystine. Catalysis depends on charge relay system residues histidine 78 and aspartate 128. 3 disulfide bridges follow: cysteine 161–cysteine 235, cysteine 191–cysteine 214, and cysteine 225–cysteine 253. Serine 229 functions as the Charge relay system in the catalytic mechanism. N-linked (GlcNAc...) asparagine glycosylation is found at asparagine 238 and asparagine 279. Serine 281 is lipidated: GPI-anchor amidated serine. Positions 282–310 (DAYGYHSSASAAYQMLLPVLLAVALPGSL) are cleaved as a propeptide — removed in mature form.

This sequence belongs to the peptidase S1 family. Expressed primarily in distal gut.

The protein resides in the cell membrane. Its activity is regulated as follows. Inhibited by aprotinin, leupeptin, benzamidine and soybean trypsin inhibitor. Partially inhibited by PMSF and DFP. Selectively cleaves synthetic peptide substrates of trypsin. Activates the epithelial sodium channel ENaC. The polypeptide is Serine protease 30 (Prss30) (Mus musculus (Mouse)).